The following is a 42-amino-acid chain: Photosystem II reaction center protein J (42 aa).

The helical transmembrane segment at 10–30 (IPLWLVGTVVGTLAIGLLAVF) threads the bilayer.

It belongs to the PsbJ family. PSII is composed of 1 copy each of membrane proteins PsbA, PsbB, PsbC, PsbD, PsbE, PsbF, PsbH, PsbI, PsbJ, PsbK, PsbL, PsbM, PsbT, PsbX, PsbY, PsbZ, Psb30/Ycf12, at least 3 peripheral proteins of the oxygen-evolving complex and a large number of cofactors. It forms dimeric complexes.

The protein localises to the plastid. It is found in the chloroplast thylakoid membrane. In terms of biological role, one of the components of the core complex of photosystem II (PSII). PSII is a light-driven water:plastoquinone oxidoreductase that uses light energy to abstract electrons from H(2)O, generating O(2) and a proton gradient subsequently used for ATP formation. It consists of a core antenna complex that captures photons, and an electron transfer chain that converts photonic excitation into a charge separation. This Chlamydomonas reinhardtii (Chlamydomonas smithii) protein is Photosystem II reaction center protein J.